Consider the following 361-residue polypeptide: Chorismate synthase (361 aa).

The disordered stretch occupies residues 37-59 (TEEDLQHDLDRRRPGTSRYTTPR). Residues 40–49 (DLQHDLDRRR) show a composition bias toward basic and acidic residues. R48 and R54 together coordinate NADP(+). Residues 125-127 (RSS), 238-239 (NA), G278, 293-297 (KPTSS), and R319 contribute to the FMN site.

Belongs to the chorismate synthase family. Homotetramer. The cofactor is FMNH2.

The enzyme catalyses 5-O-(1-carboxyvinyl)-3-phosphoshikimate = chorismate + phosphate. It participates in metabolic intermediate biosynthesis; chorismate biosynthesis; chorismate from D-erythrose 4-phosphate and phosphoenolpyruvate: step 7/7. Functionally, catalyzes the anti-1,4-elimination of the C-3 phosphate and the C-6 proR hydrogen from 5-enolpyruvylshikimate-3-phosphate (EPSP) to yield chorismate, which is the branch point compound that serves as the starting substrate for the three terminal pathways of aromatic amino acid biosynthesis. This reaction introduces a second double bond into the aromatic ring system. In Erwinia tasmaniensis (strain DSM 17950 / CFBP 7177 / CIP 109463 / NCPPB 4357 / Et1/99), this protein is Chorismate synthase.